Here is a 268-residue protein sequence, read N- to C-terminus: 4-hydroxy-tetrahydrodipicolinate reductase (268 aa).

NAD(+) contacts are provided by residues 10 to 15 (GAGGRM), D36, 99 to 101 (GTT), and 123 to 126 (APNM). The Proton donor/acceptor role is filled by H156. H157 lines the (S)-2,3,4,5-tetrahydrodipicolinate pocket. K160 serves as the catalytic Proton donor. Residue 166 to 167 (GT) participates in (S)-2,3,4,5-tetrahydrodipicolinate binding.

The protein belongs to the DapB family.

It localises to the cytoplasm. It catalyses the reaction (S)-2,3,4,5-tetrahydrodipicolinate + NAD(+) + H2O = (2S,4S)-4-hydroxy-2,3,4,5-tetrahydrodipicolinate + NADH + H(+). The catalysed reaction is (S)-2,3,4,5-tetrahydrodipicolinate + NADP(+) + H2O = (2S,4S)-4-hydroxy-2,3,4,5-tetrahydrodipicolinate + NADPH + H(+). It functions in the pathway amino-acid biosynthesis; L-lysine biosynthesis via DAP pathway; (S)-tetrahydrodipicolinate from L-aspartate: step 4/4. In terms of biological role, catalyzes the conversion of 4-hydroxy-tetrahydrodipicolinate (HTPA) to tetrahydrodipicolinate. The sequence is that of 4-hydroxy-tetrahydrodipicolinate reductase from Dechloromonas aromatica (strain RCB).